Consider the following 421-residue polypeptide: Nacrein-like protein M (421 aa).

The N-linked (GlcNAc...) asparagine glycan is linked to Asn27. The region spanning 33–420 (AGFSYDRSIC…KNKVTVYKSF (388 aa)) is the Alpha-carbonic anhydrase domain. Positions 132, 134, and 157 each coordinate Zn(2+). The span at 197–206 (DGFGDEPDDE) shows a compositional bias: acidic residues. Positions 197–303 (DGFGDEPDDE…GENGHKHGCR (107 aa)) are disordered. Over residues 207–219 (ECKRILKGHHPDN) the composition is skewed to basic and acidic residues. Over residues 220–295 (NENGNGDNGN…NNGDNGNNGE (76 aa)) the composition is skewed to low complexity. 24 tandem repeats follow at residues 225–227 (GDN), 228–230 (GNN), 231–233 (GYN), 234–236 (GDN), 237–239 (GNN), 240–242 (GDN), 243–245 (GNN), 246–248 (GYN), 249–251 (GDN), 252–254 (GNN), 255–257 (GDN), 258–260 (GNN), 261–263 (GYN), 264–266 (GDN), 267–269 (GNN), 270–272 (GDN), 273–275 (GNN), 276–278 (GEN), 279–281 (GNN), 282–284 (GEN), 285–287 (GNN), 288–290 (GDN), 291–292 (GN), and 294–296 (GEN). Positions 225–296 (GDNGNNGYNG…NGDNGNNGEN (72 aa)) are 24 X 3 AA approximate tandem repeats of G-X-N. 361–362 (TT) contacts substrate.

This sequence belongs to the alpha-carbonic anhydrase family. Homooligomer; disulfide-linked. May also be disulfide-linked to insoluble organic matrix. The cofactor is Zn(2+). As to expression, expressed in the mantle.

The protein localises to the secreted. The protein resides in the extracellular space. It localises to the extracellular matrix. The enzyme catalyses hydrogencarbonate + H(+) = CO2 + H2O. Functionally, acts as a negative regulator for calcification in the shells of mollusks. May function both as a calcium concentrator and as a carbonic anhydrase required for production of carbonate ions, which are assembled to CaCO(3) at mineralization sites. Is important for shell formation in both the calcitic prismatic layer and the aragonitic nacreous layerr. Shows inhibitory activity of crystal formation when present in free state but, when attached to the insoluble matrix, may regulate the form and size of aragonite crystal. This Pinctada maxima (Silver-lipped pearl oyster) protein is Nacrein-like protein M.